The sequence spans 368 residues: Cyclic di-GMP phosphodiesterase TM_0186 (368 aa).

Residues 2–114 (TVLIVEDDDI…LLRLKITHAL (113 aa)) enclose the Response regulatory domain. Asp-49 is subject to 4-aspartylphosphate. Positions 148–345 (YEDFLFEVLE…ITDVYRREKD (198 aa)) constitute an HD-GYP domain. The a divalent metal cation site is built by Glu-169, His-173, His-205, Asp-206, His-234, His-260, His-261, and Asp-289. The interval 341 to 368 (RREKDEDTSHNGGRSHQSSPGEGVEGIR) is disordered. A compositionally biased stretch (polar residues) spans 350–360 (HNGGRSHQSSP).

It carries out the reaction 3',3'-c-di-GMP + 2 H2O = 2 GMP + 2 H(+). With respect to regulation, can function in vivo with either divalent iron or manganese occupying di- and trimetal sites. Dimetal is necessary and sufficient to catalyze conversion of c-di-GMP to pGpG, but conversion of pGpG to GMP requires an occupied trimetal site. Functionally, phosphodiesterase (PDE) that catalyzes the hydrolysis of cyclic diguanylate (c-di-GMP) to GMP. Hydrolyzes c-di-GMP to GMP in a two-step reaction, via the linear intermediate 5'-phosphoguanylyl(3'-&gt;5')guanosine (pGpG). In Thermotoga maritima (strain ATCC 43589 / DSM 3109 / JCM 10099 / NBRC 100826 / MSB8), this protein is Cyclic di-GMP phosphodiesterase TM_0186.